A 131-amino-acid chain; its full sequence is MLRKAIADIEAKYLRTDLPEMRAGDSVRVHTKIKEGDKERIQVFEGVVIAYRKGAPGSSMFTVRKVSYGVGVERMFPVHSPRIDKIEVVGHGGVRRSRLYFLRGLQGKAARLHQEEGPGAADAAHAAPTPA.

The protein belongs to the bacterial ribosomal protein bL19 family.

This protein is located at the 30S-50S ribosomal subunit interface and may play a role in the structure and function of the aminoacyl-tRNA binding site. The polypeptide is Large ribosomal subunit protein bL19 (Anaeromyxobacter sp. (strain K)).